A 147-amino-acid polypeptide reads, in one-letter code: NADPH-dependent 7-cyano-7-deazaguanine reductase (147 aa).

A disordered region spans residues 1-23 (MQTTHLGKNSPIPQSPEEASLDY). Catalysis depends on Cys46, which acts as the Thioimide intermediate. The Proton donor role is filled by Asp53. Residues 68-70 (VES) and 87-88 (HE) each bind substrate.

The protein belongs to the GTP cyclohydrolase I family. QueF type 1 subfamily.

Its subcellular location is the cytoplasm. It carries out the reaction 7-aminomethyl-7-carbaguanine + 2 NADP(+) = 7-cyano-7-deazaguanine + 2 NADPH + 3 H(+). Its pathway is tRNA modification; tRNA-queuosine biosynthesis. Functionally, catalyzes the NADPH-dependent reduction of 7-cyano-7-deazaguanine (preQ0) to 7-aminomethyl-7-deazaguanine (preQ1). This chain is NADPH-dependent 7-cyano-7-deazaguanine reductase, found in Zymomonas mobilis subsp. mobilis (strain ATCC 31821 / ZM4 / CP4).